Here is a 500-residue protein sequence, read N- to C-terminus: L-arabinose isomerase (500 aa).

Residues E306, E333, H350, and H450 each coordinate Mn(2+).

The protein belongs to the arabinose isomerase family. As to quaternary structure, homohexamer. Mn(2+) serves as cofactor.

It catalyses the reaction beta-L-arabinopyranose = L-ribulose. The protein operates within carbohydrate degradation; L-arabinose degradation via L-ribulose; D-xylulose 5-phosphate from L-arabinose (bacterial route): step 1/3. Its function is as follows. Catalyzes the conversion of L-arabinose to L-ribulose. The sequence is that of L-arabinose isomerase from Escherichia coli O139:H28 (strain E24377A / ETEC).